The primary structure comprises 171 residues: uncharacterized protein (171 aa).

The N-terminal stretch at 1-20 (MRDFYLFLGAVFLLVLGVWA) is a signal peptide.

This is an uncharacterized protein from Aquifex aeolicus (strain VF5).